Here is a 325-residue protein sequence, read N- to C-terminus: Porphobilinogen deaminase (325 aa).

At Cys-253 the chain carries S-(dipyrrolylmethanemethyl)cysteine.

It belongs to the HMBS family. Requires dipyrromethane as cofactor.

The enzyme catalyses 4 porphobilinogen + H2O = hydroxymethylbilane + 4 NH4(+). Its pathway is porphyrin-containing compound metabolism; protoporphyrin-IX biosynthesis; coproporphyrinogen-III from 5-aminolevulinate: step 2/4. In terms of biological role, tetrapolymerization of the monopyrrole PBG into the hydroxymethylbilane pre-uroporphyrinogen in several discrete steps. This Dictyostelium discoideum (Social amoeba) protein is Porphobilinogen deaminase (hemC).